Consider the following 230-residue polypeptide: Fibrillarin-like rRNA/tRNA 2'-O-methyltransferase (230 aa).

S-adenosyl-L-methionine is bound by residues 87–88 (TT), 105–106 (EY), 130–131 (DA), and 150–153 (DVAQ).

Interacts with nop5. Component of box C/D small ribonucleoprotein (sRNP) particles that contain rpl7ae, FlpA and nop5, plus a guide RNA.

In terms of biological role, involved in pre-rRNA and tRNA processing. Utilizes the methyl donor S-adenosyl-L-methionine to catalyze the site-specific 2'-hydroxyl methylation of ribose moieties in rRNA and tRNA. Site specificity is provided by a guide RNA that base pairs with the substrate. Methylation occurs at a characteristic distance from the sequence involved in base pairing with the guide RNA. The protein is Fibrillarin-like rRNA/tRNA 2'-O-methyltransferase of Methanocaldococcus jannaschii (strain ATCC 43067 / DSM 2661 / JAL-1 / JCM 10045 / NBRC 100440) (Methanococcus jannaschii).